The primary structure comprises 281 residues: Acetylglutamate kinase (281 aa).

Residues 64–65 (GG), arginine 86, and asparagine 179 each bind substrate.

It belongs to the acetylglutamate kinase family. ArgB subfamily.

The protein localises to the cytoplasm. The catalysed reaction is N-acetyl-L-glutamate + ATP = N-acetyl-L-glutamyl 5-phosphate + ADP. Its pathway is amino-acid biosynthesis; L-arginine biosynthesis; N(2)-acetyl-L-ornithine from L-glutamate: step 2/4. In terms of biological role, catalyzes the ATP-dependent phosphorylation of N-acetyl-L-glutamate. In Campylobacter curvus (strain 525.92), this protein is Acetylglutamate kinase.